Here is a 349-residue protein sequence, read N- to C-terminus: 4-hydroxy-3-methylbut-2-en-1-yl diphosphate synthase (flavodoxin) (349 aa).

Cysteine 264, cysteine 267, cysteine 299, and glutamate 306 together coordinate [4Fe-4S] cluster.

Belongs to the IspG family. The cofactor is [4Fe-4S] cluster.

The enzyme catalyses (2E)-4-hydroxy-3-methylbut-2-enyl diphosphate + oxidized [flavodoxin] + H2O + 2 H(+) = 2-C-methyl-D-erythritol 2,4-cyclic diphosphate + reduced [flavodoxin]. Its pathway is isoprenoid biosynthesis; isopentenyl diphosphate biosynthesis via DXP pathway; isopentenyl diphosphate from 1-deoxy-D-xylulose 5-phosphate: step 5/6. In terms of biological role, converts 2C-methyl-D-erythritol 2,4-cyclodiphosphate (ME-2,4cPP) into 1-hydroxy-2-methyl-2-(E)-butenyl 4-diphosphate. The chain is 4-hydroxy-3-methylbut-2-en-1-yl diphosphate synthase (flavodoxin) from Clostridium acetobutylicum (strain ATCC 824 / DSM 792 / JCM 1419 / IAM 19013 / LMG 5710 / NBRC 13948 / NRRL B-527 / VKM B-1787 / 2291 / W).